Consider the following 1183-residue polypeptide: Phospholipid-transporting ATPase FetA (1183 aa).

A run of 3 helical transmembrane segments spans residues 96–116 (ISSLAWYTTVIPLIVVLSITG), 299–319 (VLVVWIFMFLGGMCFLLSIGH), and 348–368 (ALIFWSYFIVLNTMVPISLYV). The active-site 4-aspartylphosphate intermediate is D416. The ATP site is built by D416, K417, T418, E519, F560, K583, R617, T697, G698, D699, R812, and K818. Mg(2+) is bound at residue D416. T418 is a Mg(2+) binding site. Residue D838 coordinates Mg(2+). ATP-binding residues include N841 and D842. D842 is a Mg(2+) binding site. 6 helical membrane-spanning segments follow: residues 904 to 924 (FAFTLVHFWYAFFNGFSAQTV), 927 to 947 (IWFITFYNLIYTSLPVLGLSL), 981 to 1001 (CLLHGIYNSFVLFFVPMGTVF), 1014 to 1034 (FQSFSLLVQTTLIGVMTMQIA), 1049 to 1069 (WGSLGLYFCILILLCSDGLCL), and 1090 to 1110 (IWLCLILSTILCMIPLIGYNF).

It belongs to the cation transport ATPase (P-type) (TC 3.A.3) family. Type IV subfamily. Mg(2+) serves as cofactor. In terms of tissue distribution, highly expressed in testis.

It localises to the cytoplasmic vesicle. The protein localises to the secretory vesicle. The protein resides in the acrosome membrane. The enzyme catalyses ATP + H2O + phospholipidSide 1 = ADP + phosphate + phospholipidSide 2.. Functionally, P4-ATPase flippase which catalyzes the hydrolysis of ATP coupled to the transport of aminophospholipids from the outer to the inner leaflet of various membranes and ensures the maintenance of asymmetric distribution of phospholipids. Phospholipid translocation also seems to be implicated in vesicle formation and in uptake of lipid signaling molecules. May play a role in phospholid transport across membranes and in acrosome formation. The polypeptide is Phospholipid-transporting ATPase FetA (Atp8b5) (Mus musculus (Mouse)).